A 308-amino-acid chain; its full sequence is Endonuclease G, mitochondrial (308 aa).

Histidine 148 functions as the Proton acceptor in the catalytic mechanism. Residue asparagine 180 participates in Mg(2+) binding.

It belongs to the DNA/RNA non-specific endonuclease family. In terms of assembly, homodimer; disulfide-linked. Interacts with crn-5, crn-4, crn-1 and cyn-13. Mg(2+) is required as a cofactor.

The protein resides in the mitochondrion. In terms of biological role, endonuclease important for programmed cell death; it mediates apoptotic DNA fragmentation. In Caenorhabditis elegans, this protein is Endonuclease G, mitochondrial (cps-6).